Consider the following 178-residue polypeptide: ATP synthase subunit delta (178 aa).

The protein belongs to the ATPase delta chain family. As to quaternary structure, F-type ATPases have 2 components, F(1) - the catalytic core - and F(0) - the membrane proton channel. F(1) has five subunits: alpha(3), beta(3), gamma(1), delta(1), epsilon(1). F(0) has three main subunits: a(1), b(2) and c(10-14). The alpha and beta chains form an alternating ring which encloses part of the gamma chain. F(1) is attached to F(0) by a central stalk formed by the gamma and epsilon chains, while a peripheral stalk is formed by the delta and b chains.

It is found in the cell inner membrane. In terms of biological role, f(1)F(0) ATP synthase produces ATP from ADP in the presence of a proton or sodium gradient. F-type ATPases consist of two structural domains, F(1) containing the extramembraneous catalytic core and F(0) containing the membrane proton channel, linked together by a central stalk and a peripheral stalk. During catalysis, ATP synthesis in the catalytic domain of F(1) is coupled via a rotary mechanism of the central stalk subunits to proton translocation. Its function is as follows. This protein is part of the stalk that links CF(0) to CF(1). It either transmits conformational changes from CF(0) to CF(1) or is implicated in proton conduction. The polypeptide is ATP synthase subunit delta (Methylococcus capsulatus (strain ATCC 33009 / NCIMB 11132 / Bath)).